A 687-amino-acid polypeptide reads, in one-letter code: UvrABC system protein B (687 aa).

The region spanning 26–414 (EGLAAGEMYQ…GAVIEQVVRP (389 aa)) is the Helicase ATP-binding domain. 39 to 46 (GVTGSGKT) is an ATP binding site. The Beta-hairpin motif lies at 92–115 (YYDYYQPEAYVPASDTYIGKDASV). Residues 430–596 (QVDDLLSEIR…GIQKAVREII (167 aa)) enclose the Helicase C-terminal domain. The UVR domain maps to 630-665 (AKRLQQLERQMHKHAQNLEFEQAARLRDEIKRIKGW).

The protein belongs to the UvrB family. Forms a heterotetramer with UvrA during the search for lesions. Interacts with UvrC in an incision complex.

Its subcellular location is the cytoplasm. The UvrABC repair system catalyzes the recognition and processing of DNA lesions. A damage recognition complex composed of 2 UvrA and 2 UvrB subunits scans DNA for abnormalities. Upon binding of the UvrA(2)B(2) complex to a putative damaged site, the DNA wraps around one UvrB monomer. DNA wrap is dependent on ATP binding by UvrB and probably causes local melting of the DNA helix, facilitating insertion of UvrB beta-hairpin between the DNA strands. Then UvrB probes one DNA strand for the presence of a lesion. If a lesion is found the UvrA subunits dissociate and the UvrB-DNA preincision complex is formed. This complex is subsequently bound by UvrC and the second UvrB is released. If no lesion is found, the DNA wraps around the other UvrB subunit that will check the other stand for damage. The sequence is that of UvrABC system protein B from Nitrosococcus oceani (strain ATCC 19707 / BCRC 17464 / JCM 30415 / NCIMB 11848 / C-107).